Here is a 373-residue protein sequence, read N- to C-terminus: Chaperone protein DnaJ (373 aa).

A J domain is found at 5 to 70 (DYYELLEVDR…EKRALYDQYG (66 aa)). The segment at 134–211 (GTQKEVHYSF…CSGKGYRIEK (78 aa)) adopts a CR-type zinc-finger fold. C147, C150, C163, C166, C185, C188, C199, and C202 together coordinate Zn(2+). CXXCXGXG motif repeat units follow at residues 147-154 (CSACKGTG), 163-170 (CPECHGRG), 185-192 (CPRCHGQG), and 199-206 (CEECSGKG).

Belongs to the DnaJ family. As to quaternary structure, homodimer. Zn(2+) is required as a cofactor.

The protein resides in the cytoplasm. Its function is as follows. Participates actively in the response to hyperosmotic and heat shock by preventing the aggregation of stress-denatured proteins and by disaggregating proteins, also in an autonomous, DnaK-independent fashion. Unfolded proteins bind initially to DnaJ; upon interaction with the DnaJ-bound protein, DnaK hydrolyzes its bound ATP, resulting in the formation of a stable complex. GrpE releases ADP from DnaK; ATP binding to DnaK triggers the release of the substrate protein, thus completing the reaction cycle. Several rounds of ATP-dependent interactions between DnaJ, DnaK and GrpE are required for fully efficient folding. Also involved, together with DnaK and GrpE, in the DNA replication of plasmids through activation of initiation proteins. In Nitratiruptor sp. (strain SB155-2), this protein is Chaperone protein DnaJ.